The sequence spans 580 residues: Probable inositol transporter 3 (580 aa).

A run of 12 helical transmembrane segments spans residues 34–54, 69–89, 104–124, 127–147, 161–181, 187–207, 289–309, 316–336, 344–364, 455–475, 493–513, and 524–544; these read GIGG…LLYI, EIIV…GGWY, VLFL…VIIL, LLVG…ISEM, GLLI…FVHT, WMLG…LTLP, FVGI…AGYA, ALAL…MMFV, LMII…AVFN, FGYL…PGMG, LAGG…SETF, and GTFL…WLLV.

The protein belongs to the major facilitator superfamily. Sugar transporter (TC 2.A.1.1) family.

The protein resides in the membrane. Its function is as follows. Plasma membrane inositol-proton symporter. This is Probable inositol transporter 3 (INT3) from Arabidopsis thaliana (Mouse-ear cress).